The chain runs to 77 residues: Apelin (77 aa).

The first 22 residues, 1 to 22 (MNLRLCVQALLLLWLSLTAVCG), serve as a signal peptide directing secretion. The propeptide occupies 23–41 (VPLMLPPDGTGLEEGSMRY). Residues 46-77 (RTSRTGPGAWQGGRRKFRRQRPRLSHKGPMPF) form a disordered region. Residues 58–71 (GRRKFRRQRPRLSH) are compositionally biased toward basic residues.

It belongs to the apelin family. Several active peptides may be produced by proteolytic processing of the peptide precursor. In terms of tissue distribution, expressed in extraembryonic visceral endoderm and in the primitive streak at 6.5 and 7.5 dpc. Expressed in the anterior visceral yolk sac at 8.25 dpc. Expressed weakly in the embryonic heart at 11.5 dpc. Expressed in the adult heart. Expressed in endothelial cells and cardiomyocytes and weakly expressed in fibroblasts.

Its subcellular location is the secreted. It localises to the extracellular space. Peptide hormone that functions as endogenous ligand for the G-protein-coupled apelin receptor (APLNR/APJ). Functions as a balanced agonist activating both G(i) protein pathway and beta-arrestin pathway of APLNR. Downstream G proteins activation, apelin can inhibit cAMP production and activate key intracellular effectors such as ERKs. On the other hand, APLNR activation induces beta-arrestin recruitment to the membrane leading to desensitization and internalization of the receptor. Apelin also blunts mechanical stretch-induced hypertrophic induction from APLNR. Apelin-36 dissociates more hardly than (pyroglu)apelin-13 from APLNR. Involved in the regulation of cardiac precursor cell movements during gastrulation and heart morphogenesis. Has an inhibitory effect on cytokine production in response to T-cell receptor/CD3 cross-linking; the oral intake of apelin in the colostrum and the milk might therefore modulate immune responses in neonates. Plays a role in early coronary blood vessels formation. Mediates myocardial contractility in an ERK1/2-dependent manner. May also have a role in the central control of body fluid homeostasis by influencing vasopressin release and drinking behavior. The chain is Apelin from Mus musculus (Mouse).